The sequence spans 869 residues: MAADVEGDVYVLVEHPFEYTGKDGRLIAIQPNERCRLLRRSTEHWWHVRREPGGRPFYLPAQYVRELPALGDPVPAPQPSVLQQRPTVPEPLAYDYRFVSTPVGADGSSAEPRGRASSLCGPARQRTSGQRNSLAPGGPACLYLRPAAPVRPAQSLDDLARGGTAPPAGLLGSAGHFKASSVAGSWVCPRPLARSDSENVYEAIPDLRCPPRAKSPKQVDEPPEPVYANVERQPQVTSPRSAAAPPRLSPVWETHTDAGTGRPYYYNPDTGVTTWESPFEAPEGATSPTTSRASVGSGESLETEWGQYWDEESGRVFFYNPLTGETVWEDETEELEDDPEEQLEMQPSLSPRSPGQQRPPTPETDYPELLTSYPEEDYSPVGSFSDLGPTSPLVAPPGWSCQITPEKQMLYTNQFTQEQWVRLEDQEGKPYFYNPEDSSVQWELPQVPVPAPRSGRKSSQDSDTPAQASPPEEKIKTLDKAGVLHRTKTVDKGKRLRKKHWNASWTVLEGGVLTFFKDSKTSAASGLRQPSKLSTPEYTVELRGASLSWAPKDKSSKKNVLELRSRDGSEYLIQHDSEAIISTWHKAIAEGIEELSADLPQREEGEPSSADFGSSERLGSWKEEDVRPNAASPSLNPGSQESDLSRVRHKLRKFLQRRPTLQSLREKGYIKDQVFGCALAQLCERERSPVPRFVQQCIRTVEARGLDIDGLYRISGNLATIQKLRYKVDHDERLDLDDGRWEDVHVITGALKLFFRELPEPLFPFSHFHQFIAAIKLQDPAQRSRCVRDLVRTLPAPNHDTLRLLIQHLCRVIEHGEQNRMSVQNVAIVFGPTLLRPEMEEASMPMTMVFQNQVVELILHQCADIFPPH.

Positions 6-69 (EGDVYVLVEH…PAQYVRELPA (64 aa)) constitute an SH3 domain. The tract at residues 104–137 (GADGSSAEPRGRASSLCGPARQRTSGQRNSLAPG) is disordered. Phosphoserine is present on residues S155, S215, and S249. WW domains follow at residues 246 to 280 (PRLS…SPFE) and 299 to 333 (ESLE…DETE). 3 disordered regions span residues 275 to 299 (WESP…GSGE), 331 to 389 (ETEE…DLGP), and 447 to 474 (VPVP…PEEK). Over residues 331 to 343 (ETEELEDDPEEQL) the composition is skewed to acidic residues. Polar residues predominate over residues 345-356 (MQPSLSPRSPGQ). S350 bears the Phosphoserine mark. In terms of domain architecture, WW 3 spans 414–447 (QFTQEQWVRLEDQEGKPYFYNPEDSSVQWELPQV). Phosphoserine is present on residues S459 and S462. T464 is modified (phosphothreonine). A Phosphoserine modification is found at S469. A PH domain is found at 477–593 (TLDKAGVLHR…WHKAIAEGIE (117 aa)). A disordered region spans residues 598-644 (DLPQREEGEPSSADFGSSERLGSWKEEDVRPNAASPSLNPGSQESDL). Residues 631–642 (ASPSLNPGSQES) are compositionally biased toward polar residues. S632 carries the post-translational modification Phosphoserine. Residues 677–866 (CALAQLCERE…LILHQCADIF (190 aa)) enclose the Rho-GAP domain.

In terms of assembly, interacts with SH3KBP1/CIN85.

It localises to the cytoplasm. The protein resides in the membrane. Functionally, rho GTPase-activating protein which may be involved in clathrin-mediated endocytosis. GTPase activators for the Rho-type GTPases act by converting them to an inactive GDP-bound state. Has activity toward CDC42 and RAC1. The sequence is that of Rho GTPase-activating protein 27 (Arhgap27) from Rattus norvegicus (Rat).